The sequence spans 279 residues: Lacto-N-neotetraose biosynthesis glycosyltransferase LgtB (279 aa).

This sequence belongs to the glycosyltransferase 25 family.

It functions in the pathway glycan metabolism; lacto-N-neotetraose biosynthesis. Its pathway is bacterial outer membrane biogenesis; lipooligosaccharide biosynthesis. In terms of biological role, adds the second galactose to the lacto-N-tetraose chain in lipooligosaccharide (LOS). This is Lacto-N-neotetraose biosynthesis glycosyltransferase LgtB (lgtB) from Neisseria meningitidis serogroup A / serotype 4A (strain DSM 15465 / Z2491).